The chain runs to 448 residues: Protein ECM7 (448 aa).

Residues 1–28 (MVMSRIRDTIARPFQNLTALEKVVQWLR) are Cytoplasmic-facing. The helical transmembrane segment at 29-49 (LGTTLLIISFGLALTVGPLSS) threads the bilayer. Residues 50-204 (PRTLYMSRLD…MRSLKHKKAN (155 aa)) lie on the Extracellular side of the membrane. A helical membrane pass occupies residues 205–225 (VLHLLYAVISFQVCMLFFMIW). Over 226 to 246 (YYYIKGRFMNALKERALVHIN) the chain is Cytoplasmic. The chain crosses the membrane as a helical span at residues 247 to 267 (SLLSLVVFIGGLISSISLAWV). At 268 to 287 (NYTIQSRINTELEAFGFSYH) the chain is on the extracellular side. Residues 288 to 308 (LGVTWFALLWCFAGLISVSCL) traverse the membrane as a helical segment. The Cytoplasmic portion of the chain corresponds to 309–448 (AWSGLEWCIS…VIKPSSALQF (140 aa)). Composition is skewed to polar residues over residues 351–363 (YSQRYPQRQSTSG) and 383–406 (VDLNSENDANTSLDHGNPTANISN). Disordered stretches follow at residues 351–411 (YSQR…GKHE) and 427–448 (RSSNDSEESMQRVIKPSSALQF).

It localises to the membrane. May be involved in cell wall organization and biogenesis. This is Protein ECM7 (ECM7) from Saccharomyces cerevisiae (strain ATCC 204508 / S288c) (Baker's yeast).